The chain runs to 459 residues: Ammonium transporter Rh type B (459 aa).

Over 1-10 (MAESTNLRLR) the chain is Cytoplasmic. Residues 11-31 (LPLICIILEVILIILFGVLVE) traverse the membrane as a helical segment. Topologically, residues 32-58 (YNDDTDAKKWNKNNSTDPATNEFYYRY) are extracellular. Asparagine 45 carries N-linked (GlcNAc...) asparagine glycosylation. The chain crosses the membrane as a helical span at residues 59–79 (PSFQDVHVMIFVGFGFLMTFL). Residues 80–87 (QRYGFSSM) lie on the Cytoplasmic side of the membrane. The chain crosses the membrane as a helical span at residues 88–108 (GFNFLIAAFSLQWATLMQGFF). Residues 109–121 (HGMHHGKIHVGVT) are Extracellular-facing. A helical transmembrane segment spans residues 122-142 (SMINADFCTGAVLISFGAVLG). Topologically, residues 143-149 (KTSPVQL) are cytoplasmic. A helical membrane pass occupies residues 150–170 (LVMAILEVTLFAVNEYILLSI). The Extracellular portion of the chain corresponds to 171 to 176 (LGANDA). Residues 177-197 (GGSMTIHTFGAYFGLMVTRIL) traverse the membrane as a helical segment. The Cytoplasmic segment spans residues 198–216 (HRPNLDKSKHKNSSVYHSD). The chain crosses the membrane as a helical span at residues 217-237 (LFAMIGTIFLWMFWPSFNSAI). Residues 238–248 (TQYGDPQHRTA) are Extracellular-facing. A helical membrane pass occupies residues 249–269 (ANTYYSLAACTLATFGFSSLV). The Cytoplasmic portion of the chain corresponds to 270–274 (NPEGK). Residues 275–295 (LDMVHIQNAALAGGVAVGTAG) form a helical membrane-spanning segment. Glutamate 296 is a topological domain (extracellular). The chain crosses the membrane as a helical span at residues 297-317 (MMLTPFGSMIVGFLAGTISVL). Topologically, residues 318–340 (GYKYLTPFMESKLKIQDTCGIHN) are cytoplasmic. Residues 341 to 361 (LHGMPGILGAIVGAVTAALAS) form a helical membrane-spanning segment. Topologically, residues 362-392 (RDVYGNGLDKVFLEAADNSQWSAQTKGGFQA) are extracellular. Residues 393 to 413 (ISLAVTLGIALIGGLITGFLL) traverse the membrane as a helical segment. At 414-459 (KLPIYGTPPDTQCFEDAVYWEVPGEEEDHHELNEVSTQNEVEKLNS) the chain is on the cytoplasmic side. The tract at residues 440 to 459 (EDHHELNEVSTQNEVEKLNS) is disordered.

This sequence belongs to the ammonium transporter (TC 2.A.49) family. Rh subfamily.

It is found in the basolateral cell membrane. It localises to the cytoplasmic vesicle membrane. In terms of biological role, functions as an ammonia transporter. May play a role in the elimination of ammonia in the gill. The sequence is that of Ammonium transporter Rh type B (rhbg) from Danio rerio (Zebrafish).